Here is a 429-residue protein sequence, read N- to C-terminus: MKTVAIVGSQWGDEGKGKVIDYLATQADVVVRGQGGNNAGHTLVVEGKKYALHLIPSGVLNPNTVNIIGNGIVFDPKGFLEELEMFKTDNISTENIKISDRAHVIFPYHKELDALSEEARGDLKIGTTKKGIGPCYMDKTERSGIRICDLMDKDKFAIKLKAQIDAKNEIVKNIYGKEELFDFETIYNEYLGYAEQIRKYVADTSVIVYDAVRAGKKVLFEGAQGTLLDLDLGTYPFVTSSHPTSGGFAIGAGIGPNMIKDVVGIVKAYTTRVGEGPFVTEQINETGDKIREQGHEFGVTTGRPRRCGWFDAVIVKYAARVNGLTSISFMLLDVLTGFDKIKVCTSYKMGDKIITDFPASLDDLAKCEPVYEELDGWNEDITQIDNFDDLPENAKKYVAKIEELVGVSVDMVSVGPNRAQTIIRRNIFA.

Residues 12–18 (GDEGKGK) and 40–42 (GHT) contribute to the GTP site. The Proton acceptor role is filled by Asp13. Residues Asp13 and Gly40 each coordinate Mg(2+). IMP is bound by residues 13–16 (DEGK), 38–41 (NAGH), Thr128, Arg142, Gln224, Thr239, and Arg303. The Proton donor role is filled by His41. Residue 299 to 305 (VTTGRPR) coordinates substrate. GTP contacts are provided by residues Arg305, 331–333 (LLD), and 413–415 (SVG).

Belongs to the adenylosuccinate synthetase family. In terms of assembly, homodimer. Requires Mg(2+) as cofactor.

It is found in the cytoplasm. The catalysed reaction is IMP + L-aspartate + GTP = N(6)-(1,2-dicarboxyethyl)-AMP + GDP + phosphate + 2 H(+). Its pathway is purine metabolism; AMP biosynthesis via de novo pathway; AMP from IMP: step 1/2. Plays an important role in the de novo pathway of purine nucleotide biosynthesis. Catalyzes the first committed step in the biosynthesis of AMP from IMP. The chain is Adenylosuccinate synthetase from Clostridioides difficile (strain 630) (Peptoclostridium difficile).